The chain runs to 186 residues: Phosphoheptose isomerase 1 (186 aa).

In terms of domain architecture, SIS spans 33 to 186 (LCECLKKGGK…TLCQIIDESF (154 aa)). 48-50 (NGG) serves as a coordination point for substrate. Residues His-57 and Glu-61 each contribute to the Zn(2+) site. Residues Glu-61, 90-91 (ND), 116-118 (STS), Ser-121, and Gln-168 contribute to the substrate site. Zn(2+)-binding residues include Gln-168 and His-176.

It belongs to the SIS family. GmhA subfamily. In terms of assembly, homotetramer. Zn(2+) is required as a cofactor.

Its subcellular location is the cytoplasm. It catalyses the reaction 2 D-sedoheptulose 7-phosphate = D-glycero-alpha-D-manno-heptose 7-phosphate + D-glycero-beta-D-manno-heptose 7-phosphate. It functions in the pathway carbohydrate biosynthesis; D-glycero-D-manno-heptose 7-phosphate biosynthesis; D-glycero-alpha-D-manno-heptose 7-phosphate and D-glycero-beta-D-manno-heptose 7-phosphate from sedoheptulose 7-phosphate: step 1/1. The protein operates within bacterial outer membrane biogenesis; LOS core biosynthesis. Its function is as follows. Catalyzes the isomerization of sedoheptulose 7-phosphate in D-glycero-D-manno-heptose 7-phosphate. The protein is Phosphoheptose isomerase 1 (gmhA1) of Campylobacter jejuni subsp. jejuni serotype O:2 (strain ATCC 700819 / NCTC 11168).